The sequence spans 490 residues: Betaine aldehyde dehydrogenase (490 aa).

3 residues coordinate K(+): Ser26, Ile27, and Asp93. 150-152 lines the NAD(+) pocket; the sequence is GAW. The active-site Charge relay system is Lys162. NAD(+) is bound by residues 176-179 and 230-233; these read KPSE and GVET. Residue Leu246 coordinates K(+). The active-site Proton acceptor is the Glu252. Residues Gly254, Cys286, and Glu387 each contribute to the NAD(+) site. Residue Cys286 is the Nucleophile of the active site. Cysteine sulfenic acid (-SOH) is present on Cys286. Residues Lys457 and Gly460 each coordinate K(+). Glu464 acts as the Charge relay system in catalysis.

This sequence belongs to the aldehyde dehydrogenase family. In terms of assembly, dimer of dimers. Requires K(+) as cofactor.

It catalyses the reaction betaine aldehyde + NAD(+) + H2O = glycine betaine + NADH + 2 H(+). It functions in the pathway amine and polyamine biosynthesis; betaine biosynthesis via choline pathway; betaine from betaine aldehyde: step 1/1. Functionally, involved in the biosynthesis of the osmoprotectant glycine betaine. Catalyzes the irreversible oxidation of betaine aldehyde to the corresponding acid. The sequence is that of Betaine aldehyde dehydrogenase from Acinetobacter baumannii (strain SDF).